A 102-amino-acid chain; its full sequence is NADH-quinone oxidoreductase subunit K 2 (102 aa).

Helical transmembrane passes span 1–21, 30–50, and 65–85; these read MIVP…LGLV, IIMM…AFVG, and LMIM…VVYL.

The protein belongs to the complex I subunit 4L family. In terms of assembly, NDH-1 is composed of 14 different subunits. Subunits NuoA, H, J, K, L, M, N constitute the membrane sector of the complex.

It is found in the cell inner membrane. It carries out the reaction a quinone + NADH + 5 H(+)(in) = a quinol + NAD(+) + 4 H(+)(out). Its function is as follows. NDH-1 shuttles electrons from NADH, via FMN and iron-sulfur (Fe-S) centers, to quinones in the respiratory chain. The immediate electron acceptor for the enzyme in this species is believed to be ubiquinone. Couples the redox reaction to proton translocation (for every two electrons transferred, four hydrogen ions are translocated across the cytoplasmic membrane), and thus conserves the redox energy in a proton gradient. The sequence is that of NADH-quinone oxidoreductase subunit K 2 from Geotalea daltonii (strain DSM 22248 / JCM 15807 / FRC-32) (Geobacter daltonii).